The sequence spans 409 residues: Argininosuccinate synthase (409 aa).

ATP contacts are provided by residues 10–18 and Ala37; that span reads AYSGGLDTS. Tyr90 and Ser95 together coordinate L-citrulline. Gly120 lines the ATP pocket. The L-aspartate site is built by Thr122, Asn126, and Asp127. Asn126 serves as a coordination point for L-citrulline. Residues Arg130, Ser182, Ser191, Glu267, and Tyr279 each contribute to the L-citrulline site.

This sequence belongs to the argininosuccinate synthase family. Type 1 subfamily. In terms of assembly, homotetramer.

It is found in the cytoplasm. It carries out the reaction L-citrulline + L-aspartate + ATP = 2-(N(omega)-L-arginino)succinate + AMP + diphosphate + H(+). It functions in the pathway amino-acid biosynthesis; L-arginine biosynthesis; L-arginine from L-ornithine and carbamoyl phosphate: step 2/3. In Azoarcus sp. (strain BH72), this protein is Argininosuccinate synthase.